The chain runs to 148 residues: Glyoxalase domain-containing protein 5 (148 aa).

The VOC domain maps to 25–145 (RLDHIVMTVK…DRNLLEVSSY (121 aa)).

The protein belongs to the glyoxalase I family.

This is Glyoxalase domain-containing protein 5 (Glod5) from Mus musculus (Mouse).